The primary structure comprises 234 residues: Sugar fermentation stimulation protein homolog (234 aa).

Belongs to the SfsA family.

This Shewanella loihica (strain ATCC BAA-1088 / PV-4) protein is Sugar fermentation stimulation protein homolog.